The sequence spans 281 residues: Ribosomal RNA small subunit methyltransferase A (281 aa).

Residues asparagine 35, leucine 37, glycine 62, glutamate 83, aspartate 107, and asparagine 125 each coordinate S-adenosyl-L-methionine.

This sequence belongs to the class I-like SAM-binding methyltransferase superfamily. rRNA adenine N(6)-methyltransferase family. RsmA subfamily.

The protein localises to the cytoplasm. The enzyme catalyses adenosine(1518)/adenosine(1519) in 16S rRNA + 4 S-adenosyl-L-methionine = N(6)-dimethyladenosine(1518)/N(6)-dimethyladenosine(1519) in 16S rRNA + 4 S-adenosyl-L-homocysteine + 4 H(+). Functionally, specifically dimethylates two adjacent adenosines (A1518 and A1519) in the loop of a conserved hairpin near the 3'-end of 16S rRNA in the 30S particle. May play a critical role in biogenesis of 30S subunits. In Deinococcus geothermalis (strain DSM 11300 / CIP 105573 / AG-3a), this protein is Ribosomal RNA small subunit methyltransferase A.